The chain runs to 286 residues: tRNA (guanine-N(7)-)-methyltransferase (286 aa).

S-adenosyl-L-methionine-binding positions include G103, 126–127 (EI), 161–162 (NA), and C181. Residue D184 is part of the active site. Position 259 to 261 (259 to 261 (TEE)) interacts with S-adenosyl-L-methionine.

The protein belongs to the class I-like SAM-binding methyltransferase superfamily. TrmB family. In terms of assembly, forms a complex with TRM82.

The protein localises to the nucleus. It carries out the reaction guanosine(46) in tRNA + S-adenosyl-L-methionine = N(7)-methylguanosine(46) in tRNA + S-adenosyl-L-homocysteine. It functions in the pathway tRNA modification; N(7)-methylguanine-tRNA biosynthesis. Its function is as follows. Catalyzes the formation of N(7)-methylguanine at position 46 (m7G46) in tRNA. The sequence is that of tRNA (guanine-N(7)-)-methyltransferase from Vanderwaltozyma polyspora (strain ATCC 22028 / DSM 70294 / BCRC 21397 / CBS 2163 / NBRC 10782 / NRRL Y-8283 / UCD 57-17) (Kluyveromyces polysporus).